A 382-amino-acid chain; its full sequence is UDP-N-acetylglucosamine--N-acetylmuramyl-(pentapeptide) pyrophosphoryl-undecaprenol N-acetylglucosamine transferase (382 aa).

UDP-N-acetyl-alpha-D-glucosamine-binding positions include threonine 22–glycine 24, asparagine 134, arginine 186, serine 212, alanine 285–glutamate 290, and glutamine 311.

This sequence belongs to the glycosyltransferase 28 family. MurG subfamily.

The protein resides in the cell inner membrane. It carries out the reaction di-trans,octa-cis-undecaprenyl diphospho-N-acetyl-alpha-D-muramoyl-L-alanyl-D-glutamyl-meso-2,6-diaminopimeloyl-D-alanyl-D-alanine + UDP-N-acetyl-alpha-D-glucosamine = di-trans,octa-cis-undecaprenyl diphospho-[N-acetyl-alpha-D-glucosaminyl-(1-&gt;4)]-N-acetyl-alpha-D-muramoyl-L-alanyl-D-glutamyl-meso-2,6-diaminopimeloyl-D-alanyl-D-alanine + UDP + H(+). The protein operates within cell wall biogenesis; peptidoglycan biosynthesis. Functionally, cell wall formation. Catalyzes the transfer of a GlcNAc subunit on undecaprenyl-pyrophosphoryl-MurNAc-pentapeptide (lipid intermediate I) to form undecaprenyl-pyrophosphoryl-MurNAc-(pentapeptide)GlcNAc (lipid intermediate II). In Pseudoalteromonas atlantica (strain T6c / ATCC BAA-1087), this protein is UDP-N-acetylglucosamine--N-acetylmuramyl-(pentapeptide) pyrophosphoryl-undecaprenol N-acetylglucosamine transferase.